We begin with the raw amino-acid sequence, 584 residues long: Eukaryotic translation initiation factor 3 subunit D (584 aa).

The disordered stretch occupies residues 118 to 184 (IFTRGRGQRG…KDYDKPQRNR (67 aa)). Gly residues predominate over residues 127–167 (GRGGQDTRGGGRQQFQRGGRGGQQYGGGGYSDRGGGRGGGA). The span at 173–184 (GWKDYDKPQRNR) shows a compositional bias: basic and acidic residues. Residues 312 to 326 (ALDMVTVNENAADAP) are RNA gate. The interval 563–584 (PANGLDDDDEGPEPEGVAEEED) is disordered. Residues 567-584 (LDDDDEGPEPEGVAEEED) are compositionally biased toward acidic residues.

The protein belongs to the eIF-3 subunit D family. In terms of assembly, component of the eukaryotic translation initiation factor 3 (eIF-3) complex.

It localises to the cytoplasm. In terms of biological role, mRNA cap-binding component of the eukaryotic translation initiation factor 3 (eIF-3) complex, which is involved in protein synthesis of a specialized repertoire of mRNAs and, together with other initiation factors, stimulates binding of mRNA and methionyl-tRNAi to the 40S ribosome. The eIF-3 complex specifically targets and initiates translation of a subset of mRNAs involved in cell proliferation. In the eIF-3 complex, eif3d specifically recognizes and binds the 7-methylguanosine cap of a subset of mRNAs. This is Eukaryotic translation initiation factor 3 subunit D from Chaetomium globosum (strain ATCC 6205 / CBS 148.51 / DSM 1962 / NBRC 6347 / NRRL 1970) (Soil fungus).